A 526-amino-acid polypeptide reads, in one-letter code: Probable lipid II flippase MurJ (526 aa).

The next 14 membrane-spanning stretches (helical) occupy residues 35–55, 58–78, 96–116, 137–157, 160–180, 190–210, 235–255, 281–301, 313–333, 362–382, 391–411, 415–435, 459–479, and 489–509; these read LMGT…PNLF, LFAE…HYSM, AIFT…ILGA, MFPY…LHSI, FVPS…SMYF, IAAA…QLIF, IIAL…NDLV, LLGI…SFHV, LITA…FVLF, WHSV…AFYA, IAGT…FIPL, GIAF…WMFL, LFSV…AYFF, and GVPL…LLLL.

This sequence belongs to the MurJ/MviN family.

It is found in the cell inner membrane. It functions in the pathway cell wall biogenesis; peptidoglycan biosynthesis. Its function is as follows. Involved in peptidoglycan biosynthesis. Transports lipid-linked peptidoglycan precursors from the inner to the outer leaflet of the cytoplasmic membrane. The polypeptide is Probable lipid II flippase MurJ (Treponema pallidum (strain Nichols)).